The following is a 184-amino-acid chain: Trichothecene 15-O-acetyltransferase SAT16 (184 aa).

Position 154 (His-154) interacts with substrate.

The protein belongs to the trichothecene O-acetyltransferase family.

The protein operates within mycotoxin biosynthesis. Trichothecene 15-O-acetyltransferase; part of the satratoxin SC2 cluster involved in the biosynthesis of satratoxins, trichothecene mycotoxins that are associated with human food poisonings. Satratoxins are suggested to be made by products of multiple gene clusters (SC1, SC2 and SC3) that encode 21 proteins in all, including polyketide synthases, acetyltransferases, and other enzymes expected to modify the trichothecene skeleton. SC1 encodes 10 proteins, SAT1 to SAT10. The largest are SAT8, which encodes a putative polyketide synthase (PKS) with a conventional non-reducing architecture, and SAT10, a putative protein containing four ankyrin repeats and thus may be involved in protein scaffolding. The putative short-chain reductase SAT3 may assist the PKS in some capacity. SAT6 contains a secretory lipase domain and acts probably as a trichothecene esterase. SAT5 encodes a putative acetyltransferase, and so, with SAT6, may affect endogenous protection from toxicity. The probable transcription factor SAT9 may regulate the expression of the SC1 cluster. SC2 encodes proteins SAT11 to SAT16, the largest of which encodes the putative reducing PKS SAT13. SAT11 is a cytochrome P450 monooxygenase, while SAT14 and SAT16 are probable acetyltransferases. The SC2 cluster may be regulated by the transcription factor SAT15. SC3 is a small cluster that encodes 5 proteins, SAT17 to SAT21. SAT21 is a putative MFS-type transporter which may have a role in exporting secondary metabolites. The four other proteins putatively encoded in SC3 include the taurine hydroxylase-like protein SAT17, the O-methyltransferase SAT18, the acetyltransferase SAT19, and the Cys6-type zinc finger SAT20, the latter being probably involved in regulation of SC3 expression. This Stachybotrys chartarum (strain CBS 109288 / IBT 7711) (Toxic black mold) protein is Trichothecene 15-O-acetyltransferase SAT16.